A 148-amino-acid chain; its full sequence is Large ribosomal subunit protein uL15 (148 aa).

The tract at residues 1–51 is disordered; that stretch reads MNLSNLKPAEGSTKTRKRIGRGAGSGLGGTSTRGHKGAKSRSGYSKKVGFE. Positions 21-31 are enriched in gly residues; that stretch reads RGAGSGLGGTS.

This sequence belongs to the universal ribosomal protein uL15 family. As to quaternary structure, part of the 50S ribosomal subunit.

Functionally, binds to the 23S rRNA. This is Large ribosomal subunit protein uL15 from Bacteroides thetaiotaomicron (strain ATCC 29148 / DSM 2079 / JCM 5827 / CCUG 10774 / NCTC 10582 / VPI-5482 / E50).